A 231-amino-acid chain; its full sequence is tRNA1(Val) (adenine(37)-N6)-methyltransferase (231 aa).

The protein belongs to the methyltransferase superfamily. tRNA (adenine-N(6)-)-methyltransferase family.

It localises to the cytoplasm. The catalysed reaction is adenosine(37) in tRNA1(Val) + S-adenosyl-L-methionine = N(6)-methyladenosine(37) in tRNA1(Val) + S-adenosyl-L-homocysteine + H(+). Specifically methylates the adenine in position 37 of tRNA(1)(Val) (anticodon cmo5UAC). This is tRNA1(Val) (adenine(37)-N6)-methyltransferase from Flavobacteriaceae bacterium (strain 3519-10).